The chain runs to 954 residues: MSDYKDTLNLPETGFPMRGNLAQREPVMLKRWDDEDLYGEIRKAKKGNKSFILHDGPPYANGDIHIGHALNKILKDIIIKSKTLSGFDAPYIPGWDCHGLPIELMVEKKWGKPGRKLTAAEFRQKCREYAAGQVEGQKESFIRLGVLGQWDKPYRTMDFATEANIIRSLGKVAENDHLLKGFKPVHWCTDCGSALAEAEVEYQDKVSPSIDVKFKAVDEAGVVAKFNCAEGHEGQGDVSVVIWTTTPWTMPANRAVAVRDDLEYVLVQVEADAANDKAAYRLIVAAELAKDVMDRAGIEHFHNLGFCKGADLELMRFNHPFYSFDVPIVLGDHVTTESGTGCVHTAPGHGQEDFVVGQKYGLEIANPVGSNGVYLPDTELFAGQHVFKANDVVVETLKEHGALLHHHAYEHSYPHCWRHKTPIIFRATPQWFISMDKAGLRAKALGEIKNVQWLPEWGQSRIEGMVEGRPEWCISRQRTWGVPIALFVHKETQELHPDTRVLIEKVAQLVEQKGIQAWWDLNPAELMGEADAANYEKVLDTLDVWFDSGVTHFSVVDSREEYNGHSADLYLEGSDQHRGWFQSSLVSSVAMKGKAPYNQVLTHGFVVDGQGRKMSKSVGNVVAPKDVTNKLGADILRLWVASTDYTGEVAVSDEILKRSADAYRRIRNTARFFLANLNGFNPETDLVAPEEMVALDRWAVGRAMEAQEEIIKAYDGYNLHGVTQRLMQFCSVEMGSFYLDVIKDRQYTAKQGGHAQRSCQTALFYIVEALVRWMAPIMSFTADEIWNEMPASQGNGEQRDKFVFTGEWFEGLFGLADDEVMNDEFWAEIQQVRGAVNKLLELARKDKVIGGSLQAEITLHANETLAAKLNTLEDELRFVLLTSKAAVAITDSMPEGAQKTDVEGLFVTVNASEAAKCDRCWHHVADVGTIEGHEEVCGRCVTNISGEGEERKFA.

The 'HIGH' region motif lies at 58–68 (PYANGDIHIGH). Glutamate 572 contacts L-isoleucyl-5'-AMP. The 'KMSKS' region motif lies at 613-617 (KMSKS). Lysine 616 lines the ATP pocket. Positions 917, 920, 937, and 940 each coordinate Zn(2+).

It belongs to the class-I aminoacyl-tRNA synthetase family. IleS type 1 subfamily. Monomer. The cofactor is Zn(2+).

The protein localises to the cytoplasm. The catalysed reaction is tRNA(Ile) + L-isoleucine + ATP = L-isoleucyl-tRNA(Ile) + AMP + diphosphate. In terms of biological role, catalyzes the attachment of isoleucine to tRNA(Ile). As IleRS can inadvertently accommodate and process structurally similar amino acids such as valine, to avoid such errors it has two additional distinct tRNA(Ile)-dependent editing activities. One activity is designated as 'pretransfer' editing and involves the hydrolysis of activated Val-AMP. The other activity is designated 'posttransfer' editing and involves deacylation of mischarged Val-tRNA(Ile). The polypeptide is Isoleucine--tRNA ligase (Photobacterium profundum (strain SS9)).